The sequence spans 1058 residues: Ubiquitin-like modifier-activating enzyme 1 (1058 aa).

The disordered stretch occupies residues 1 to 46 (MSSSPLSKKRRVSGPDPKPGSNCSSAQSVLSEVSSVPTNGMAKNGS). Serine 2 bears the N-acetylserine mark. Phosphoserine is present on residues serine 4, serine 13, serine 21, serine 24, and serine 46. Low complexity predominate over residues 24–36 (SSAQSVLSEVSSV). The residue at position 55 (tyrosine 55) is a Phosphotyrosine. Repeat copies occupy residues 63–199 (GHEA…GQLF) and 459–611 (GSDL…QVVI). The interval 63–611 (GHEAMKMLQT…GTKGNVQVVI (549 aa)) is 2 approximate repeats. Residues alanine 478, aspartate 504, arginine 515, lysine 528, and 576 to 577 (DN) each bind ATP. At lysine 528 the chain carries N6-succinyllysine. The Glycyl thioester intermediate role is filled by cysteine 632. Lysine 671 is subject to N6-acetyllysine. Threonine 800 bears the Phosphothreonine mark. 4 positions are modified to phosphoserine: serine 810, serine 816, serine 820, and serine 835. Lysine 980 bears the N6-acetyllysine mark.

It belongs to the ubiquitin-activating E1 family. Monomer. Interacts with GAN (via BTB domain). Post-translationally, ISGylated.

The protein resides in the cytoplasm. The protein localises to the mitochondrion. It localises to the nucleus. The enzyme catalyses ATP + ubiquitin + [E1 ubiquitin-activating enzyme]-L-cysteine = AMP + diphosphate + S-ubiquitinyl-[E1 ubiquitin-activating enzyme]-L-cysteine.. It functions in the pathway protein modification; protein ubiquitination. Its function is as follows. Catalyzes the first step in ubiquitin conjugation to mark cellular proteins for degradation through the ubiquitin-proteasome system. Activates ubiquitin by first adenylating its C-terminal glycine residue with ATP, and thereafter linking this residue to the side chain of a cysteine residue in E1, yielding a ubiquitin-E1 thioester and free AMP. Essential for the formation of radiation-induced foci, timely DNA repair and for response to replication stress. Promotes the recruitment of TP53BP1 and BRCA1 at DNA damage sites. This Rattus norvegicus (Rat) protein is Ubiquitin-like modifier-activating enzyme 1.